The following is a 400-amino-acid chain: Putative F-box protein At5g41510 (400 aa).

Residues 2–47 form the F-box domain; it reads ATMISNLPRDLIEEIFSRVPLTSMKAVRLTCKSWNNLSKSESFTKV.

This Arabidopsis thaliana (Mouse-ear cress) protein is Putative F-box protein At5g41510.